The following is a 503-amino-acid chain: Variant surface glycoprotein ILTAT 1.3 (503 aa).

The signal sequence occupies residues 1–29 (MTKAYENRMLLQALVLAAVLCTTHAEGTA). 2 disulfides stabilise this stretch: Cys-42–Cys-168 and Cys-150–Cys-206. Residues Asn-419 and Asn-432 are each glycosylated (N-linked (GlcNAc...) asparagine). The GPI-anchor amidated aspartate moiety is linked to residue Asp-480. Positions 481-503 (SSFILNKQFALSVVSAAFAALLF) are cleaved as a propeptide — removed in mature form.

It is found in the cell membrane. Functionally, VSG forms a coat on the surface of the parasite. The trypanosome evades the immune response of the host by expressing a series of antigenically distinct VSGs from an estimated 1000 VSG genes. This is Variant surface glycoprotein ILTAT 1.3 from Trypanosoma brucei brucei.